Here is a 255-residue protein sequence, read N- to C-terminus: Type III pantothenate kinase (255 aa).

Position 6 to 13 (6 to 13 (DIGNSNID)) interacts with ATP. 107–110 (GADL) contacts substrate. The active-site Proton acceptor is D109. D129 lines the K(+) pocket. T132 is a binding site for ATP. T183 lines the substrate pocket.

The protein belongs to the type III pantothenate kinase family. In terms of assembly, homodimer. NH4(+) serves as cofactor. It depends on K(+) as a cofactor.

It localises to the cytoplasm. The catalysed reaction is (R)-pantothenate + ATP = (R)-4'-phosphopantothenate + ADP + H(+). Its pathway is cofactor biosynthesis; coenzyme A biosynthesis; CoA from (R)-pantothenate: step 1/5. Catalyzes the phosphorylation of pantothenate (Pan), the first step in CoA biosynthesis. In Dictyoglomus turgidum (strain DSM 6724 / Z-1310), this protein is Type III pantothenate kinase.